Reading from the N-terminus, the 111-residue chain is Small ribosomal subunit protein bS16 (111 aa).

It belongs to the bacterial ribosomal protein bS16 family.

This is Small ribosomal subunit protein bS16 from Rickettsia bellii (strain OSU 85-389).